The following is a 296-amino-acid chain: Aspartate carbamoyltransferase catalytic subunit (296 aa).

The carbamoyl phosphate site is built by arginine 50 and threonine 51. Lysine 79 serves as a coordination point for L-aspartate. Residues arginine 100, histidine 128, and glutamine 131 each coordinate carbamoyl phosphate. L-aspartate-binding residues include arginine 161 and arginine 219. Positions 258 and 259 each coordinate carbamoyl phosphate.

It belongs to the aspartate/ornithine carbamoyltransferase superfamily. ATCase family. Heterooligomer of catalytic and regulatory chains.

The enzyme catalyses carbamoyl phosphate + L-aspartate = N-carbamoyl-L-aspartate + phosphate + H(+). It participates in pyrimidine metabolism; UMP biosynthesis via de novo pathway; (S)-dihydroorotate from bicarbonate: step 2/3. Functionally, catalyzes the condensation of carbamoyl phosphate and aspartate to form carbamoyl aspartate and inorganic phosphate, the committed step in the de novo pyrimidine nucleotide biosynthesis pathway. The sequence is that of Aspartate carbamoyltransferase catalytic subunit from Korarchaeum cryptofilum (strain OPF8).